Here is a 51-residue protein sequence, read N- to C-terminus: uncharacterized protein (51 aa).

The segment at 1 to 51 (MARTNVKLCPPKRSKRPSNSRSKSTSHSNRRSLNSLRRTRTSRRSNNGKFT) is disordered. Residues 19–36 (NSRSKSTSHSNRRSLNSL) are compositionally biased toward low complexity.

This is an uncharacterized protein from Bdellovibrio bacteriovorus (Bacteriophage phiMH2K).